The primary structure comprises 346 residues: Cytidine deaminase 5 (346 aa).

2 CMP/dCMP-type deaminase domains span residues 20–148 and 183–304; these read TDHK…FGSE and DLCS…ITGA. Position 58–60 (58–60) interacts with substrate; the sequence is NVE. Zn(2+) is bound at residue H71. The active-site Proton donor is the E73. The Zn(2+) site is built by C104 and C107.

This sequence belongs to the cytidine and deoxycytidylate deaminase family. As to quaternary structure, homodimer. Zn(2+) is required as a cofactor.

It catalyses the reaction cytidine + H2O + H(+) = uridine + NH4(+). The enzyme catalyses 2'-deoxycytidine + H2O + H(+) = 2'-deoxyuridine + NH4(+). In terms of biological role, this enzyme scavenges exogenous and endogenous cytidine and 2'-deoxycytidine for UMP synthesis. The polypeptide is Cytidine deaminase 5 (CDA5) (Arabidopsis thaliana (Mouse-ear cress)).